The primary structure comprises 347 residues: Dihydroorotase (347 aa).

The Zn(2+) site is built by histidine 14 and histidine 16. Substrate-binding positions include histidine 16–arginine 18 and asparagine 42. 3 residues coordinate Zn(2+): lysine 100, histidine 137, and histidine 175. At lysine 100 the chain carries N6-carboxylysine. Histidine 137 contacts substrate. Position 220 (leucine 220) interacts with substrate. Residue aspartate 248 coordinates Zn(2+). The active site involves aspartate 248. Substrate is bound by residues histidine 252 and alanine 264.

This sequence belongs to the metallo-dependent hydrolases superfamily. DHOase family. Class II DHOase subfamily. Homodimer. Requires Zn(2+) as cofactor.

It catalyses the reaction (S)-dihydroorotate + H2O = N-carbamoyl-L-aspartate + H(+). The protein operates within pyrimidine metabolism; UMP biosynthesis via de novo pathway; (S)-dihydroorotate from bicarbonate: step 3/3. In terms of biological role, catalyzes the reversible cyclization of carbamoyl aspartate to dihydroorotate. The sequence is that of Dihydroorotase from Stutzerimonas stutzeri (strain A1501) (Pseudomonas stutzeri).